Here is a 571-residue protein sequence, read N- to C-terminus: Adenine deaminase (571 aa).

Belongs to the metallo-dependent hydrolases superfamily. Adenine deaminase family. The cofactor is Mn(2+).

It catalyses the reaction adenine + H2O + H(+) = hypoxanthine + NH4(+). The protein is Adenine deaminase of Dehalococcoides mccartyi (strain ATCC BAA-2266 / KCTC 15142 / 195) (Dehalococcoides ethenogenes (strain 195)).